Consider the following 1047-residue polypeptide: FACT complex subunit SPT16 (1047 aa).

Ala2 bears the N-acetylalanine mark. The residue at position 139 (Lys139) is an N6-acetyllysine. At Ser188 the chain carries Phosphoserine. 2 positions are modified to N6-acetyllysine: Lys196 and Lys223. Positions 432-507 (LKNEDEEEEE…GEQQIQKARK (76 aa)) form a coiled coil. Ser455 carries the phosphoserine modification. The disordered stretch occupies residues 492–518 (RLTEQKGEQQIQKARKSNVSYKNPSLM). Residue Lys497 forms a Glycyl lysine isopeptide (Lys-Gly) (interchain with G-Cter in SUMO2) linkage. Positions 499 to 514 (EQQIQKARKSNVSYKN) are enriched in polar residues. Ser508 carries the phosphoserine modification. Lys513 is subject to N6-acetyllysine; alternate. A Glycyl lysine isopeptide (Lys-Gly) (interchain with G-Cter in SUMO2); alternate cross-link involves residue Lys513. Lys647 is covalently cross-linked (Glycyl lysine isopeptide (Lys-Gly) (interchain with G-Cter in SUMO2)). Phosphoserine is present on residues Ser650 and Ser658. An N6-acetyllysine mark is found at Lys732 and Lys786. Thr903 is subject to Phosphothreonine. Lys904 carries the N6-acetyllysine modification. Residues 918–1047 (EQGGWSFLEP…SSAPPKKKRK (130 aa)) are disordered. The span at 927–973 (PEGEGSDAEEGDSESEIEDETFNPSEDDYEEEEEDSDEDYSSEAEES) shows a compositional bias: acidic residues. Residues Ser979, Ser982, Ser986, and Ser1015 each carry the phosphoserine modification. The span at 985 to 1005 (ESGKDWDELEEEARKADRESR) shows a compositional bias: basic and acidic residues. The span at 1024–1039 (VHSSGRGSNRGSRHSS) shows a compositional bias: low complexity.

The protein belongs to the peptidase M24 family. SPT16 subfamily. In terms of assembly, interacts with MYOG (via C-terminal region). Component of the FACT complex, a stable heterodimer of SSRP1 and SUPT16H. Also a component of a CK2-SPT16-SSRP1 complex which forms following UV irradiation, composed of SSRP1, SUPT16H, CSNK2A1, CSNK2A2 and CSNK2B. Interacts with NEK9. Binds to histone H2A-H2B. Identified in a centromere complex containing histones H2A, H2B and H4, and at least CENPA, CENPB, CENPC, CENPT, CENPN, HJURP, SUPT16H, SSRP1 and RSF1. Interacts with GTF2E2. (Microbial infection) Interacts with Herpes simplex virus 1 (HHV-1) protein ICP22; this interaction relocalizes the FACT complex to viral genomes in infected cells. Post-translationally, ADP-ribosylated. ADP-ribosylation by PARP1 is induced by genotoxic stress and correlates with dissociation of FACT from chromatin. As to expression, ubiquitous.

The protein localises to the nucleus. It localises to the chromosome. Component of the FACT complex, a general chromatin factor that acts to reorganize nucleosomes. The FACT complex is involved in multiple processes that require DNA as a template such as mRNA elongation, DNA replication and DNA repair. During transcription elongation the FACT complex acts as a histone chaperone that both destabilizes and restores nucleosomal structure. It facilitates the passage of RNA polymerase II and transcription by promoting the dissociation of one histone H2A-H2B dimer from the nucleosome, then subsequently promotes the reestablishment of the nucleosome following the passage of RNA polymerase II. The FACT complex is probably also involved in phosphorylation of 'Ser-392' of p53/TP53 via its association with CK2 (casein kinase II). The chain is FACT complex subunit SPT16 (SUPT16H) from Homo sapiens (Human).